The sequence spans 310 residues: GTP-binding protein GTR1 (310 aa).

Residues serine 15, glycine 18, lysine 19, serine 20, serine 21, threonine 35, threonine 41, glycine 64, histidine 126, aspartate 129, and isoleucine 166 each coordinate GTP.

Belongs to the GTR/RAG GTP-binding protein family. As to quaternary structure, heterodimer; with GTR2. Component of the GSE complex composed of GTR1, GTR2, SLM4, MEH1 and LTV1. Interacts with GTR2; the interaction is direct. Interacts with TOR1.

The protein localises to the vacuole membrane. It catalyses the reaction GTP + H2O = GDP + phosphate + H(+). GTPase involved in activation of the TORC1 signaling pathway, which promotes growth and represses autophagy in nutrient-rich conditions. Also required for TORC1 inactivation during nitrogen starvation. Required for intracellular sorting of GAP1 out of the endosome. Functionally associated with the inorganic phosphate transporter PHO84, and may be involved in regulating its function or localization. The protein is GTP-binding protein GTR1 (GTR1) of Saccharomyces cerevisiae (strain ATCC 204508 / S288c) (Baker's yeast).